A 721-amino-acid polypeptide reads, in one-letter code: Polyribonucleotide nucleotidyltransferase (721 aa).

Residues D495 and D501 each contribute to the Mg(2+) site. One can recognise a KH domain in the interval 562–621; that stretch reads PRITTIKIRPERIKDIIGPGGKTIKDITARTGTSINIEDDGSVSIASPNQDKVEEAIKMI. Residues 631 to 699 enclose the S1 motif domain; that stretch reads GRIYLGTVRK…RSGKIRLSRK (69 aa). Residues 699–721 are disordered; sequence KEALADSAKKSEGTEPPKGEPAK.

This sequence belongs to the polyribonucleotide nucleotidyltransferase family. Mg(2+) is required as a cofactor.

It is found in the cytoplasm. The enzyme catalyses RNA(n+1) + phosphate = RNA(n) + a ribonucleoside 5'-diphosphate. Involved in mRNA degradation. Catalyzes the phosphorolysis of single-stranded polyribonucleotides processively in the 3'- to 5'-direction. The protein is Polyribonucleotide nucleotidyltransferase of Anaeromyxobacter dehalogenans (strain 2CP-1 / ATCC BAA-258).